The sequence spans 443 residues: Thymidine phosphorylase (443 aa).

This sequence belongs to the thymidine/pyrimidine-nucleoside phosphorylase family. Homodimer.

The enzyme catalyses thymidine + phosphate = 2-deoxy-alpha-D-ribose 1-phosphate + thymine. Its pathway is pyrimidine metabolism; dTMP biosynthesis via salvage pathway; dTMP from thymine: step 1/2. In terms of biological role, the enzymes which catalyze the reversible phosphorolysis of pyrimidine nucleosides are involved in the degradation of these compounds and in their utilization as carbon and energy sources, or in the rescue of pyrimidine bases for nucleotide synthesis. This is Thymidine phosphorylase from Shewanella frigidimarina (strain NCIMB 400).